The following is a 620-amino-acid chain: Chaperone protein HscA homolog (620 aa).

The protein belongs to the heat shock protein 70 family.

Its function is as follows. Chaperone involved in the maturation of iron-sulfur cluster-containing proteins. Has a low intrinsic ATPase activity which is markedly stimulated by HscB. The protein is Chaperone protein HscA homolog of Bordetella petrii (strain ATCC BAA-461 / DSM 12804 / CCUG 43448).